A 122-amino-acid polypeptide reads, in one-letter code: Large ribosomal subunit protein uL14 (122 aa).

Belongs to the universal ribosomal protein uL14 family. Part of the 50S ribosomal subunit. Forms a cluster with proteins L3 and L19. In the 70S ribosome, L14 and L19 interact and together make contacts with the 16S rRNA in bridges B5 and B8.

Binds to 23S rRNA. Forms part of two intersubunit bridges in the 70S ribosome. The sequence is that of Large ribosomal subunit protein uL14 from Sinorhizobium fredii (strain NBRC 101917 / NGR234).